The following is a 368-amino-acid chain: 4-hydroxy-3-methylbut-2-en-1-yl diphosphate synthase (flavodoxin) (368 aa).

[4Fe-4S] cluster-binding residues include C268, C271, C303, and E310.

This sequence belongs to the IspG family. [4Fe-4S] cluster is required as a cofactor.

The enzyme catalyses (2E)-4-hydroxy-3-methylbut-2-enyl diphosphate + oxidized [flavodoxin] + H2O + 2 H(+) = 2-C-methyl-D-erythritol 2,4-cyclic diphosphate + reduced [flavodoxin]. Its pathway is isoprenoid biosynthesis; isopentenyl diphosphate biosynthesis via DXP pathway; isopentenyl diphosphate from 1-deoxy-D-xylulose 5-phosphate: step 5/6. Functionally, converts 2C-methyl-D-erythritol 2,4-cyclodiphosphate (ME-2,4cPP) into 1-hydroxy-2-methyl-2-(E)-butenyl 4-diphosphate. The protein is 4-hydroxy-3-methylbut-2-en-1-yl diphosphate synthase (flavodoxin) of Listeria monocytogenes serotype 4b (strain F2365).